Consider the following 175-residue polypeptide: Translation initiation factor IF-3 (175 aa).

The protein belongs to the IF-3 family. Monomer.

It is found in the cytoplasm. In terms of biological role, IF-3 binds to the 30S ribosomal subunit and shifts the equilibrium between 70S ribosomes and their 50S and 30S subunits in favor of the free subunits, thus enhancing the availability of 30S subunits on which protein synthesis initiation begins. In Staphylococcus aureus (strain USA300), this protein is Translation initiation factor IF-3.